Reading from the N-terminus, the 32-residue chain is Cytochrome b6-f complex subunit 8 (32 aa).

Residues Ile-6–Val-26 form a helical membrane-spanning segment.

It belongs to the PetN family. In terms of assembly, the 4 large subunits of the cytochrome b6-f complex are cytochrome b6, subunit IV (17 kDa polypeptide, PetD), cytochrome f and the Rieske protein, while the 4 small subunits are PetG, PetL, PetM and PetN. The complex functions as a dimer.

It localises to the plastid. It is found in the chloroplast thylakoid membrane. Component of the cytochrome b6-f complex, which mediates electron transfer between photosystem II (PSII) and photosystem I (PSI), cyclic electron flow around PSI, and state transitions. The sequence is that of Cytochrome b6-f complex subunit 8 from Pinus koraiensis (Korean pine).